The following is a 297-amino-acid chain: 4-hydroxy-tetrahydrodipicolinate synthase (297 aa).

A pyruvate-binding site is contributed by T49. The active-site Proton donor/acceptor is the Y137. K166 (schiff-base intermediate with substrate) is an active-site residue. I208 serves as a coordination point for pyruvate.

The protein belongs to the DapA family. In terms of assembly, homotetramer; dimer of dimers.

The protein resides in the cytoplasm. It catalyses the reaction L-aspartate 4-semialdehyde + pyruvate = (2S,4S)-4-hydroxy-2,3,4,5-tetrahydrodipicolinate + H2O + H(+). It participates in amino-acid biosynthesis; L-lysine biosynthesis via DAP pathway; (S)-tetrahydrodipicolinate from L-aspartate: step 3/4. Its function is as follows. Catalyzes the condensation of (S)-aspartate-beta-semialdehyde [(S)-ASA] and pyruvate to 4-hydroxy-tetrahydrodipicolinate (HTPA). The chain is 4-hydroxy-tetrahydrodipicolinate synthase from Prosthecochloris aestuarii (strain DSM 271 / SK 413).